Here is a 383-residue protein sequence, read N- to C-terminus: Succinyl-diaminopimelate desuccinylase (383 aa).

Residue His-72 participates in Zn(2+) binding. Residue Asp-74 is part of the active site. Residue Asp-105 participates in Zn(2+) binding. The Proton acceptor role is filled by Glu-137. Residues Glu-138, Glu-167, and His-352 each coordinate Zn(2+).

The protein belongs to the peptidase M20A family. DapE subfamily. As to quaternary structure, homodimer. It depends on Zn(2+) as a cofactor. Requires Co(2+) as cofactor.

The catalysed reaction is N-succinyl-(2S,6S)-2,6-diaminopimelate + H2O = (2S,6S)-2,6-diaminopimelate + succinate. Its pathway is amino-acid biosynthesis; L-lysine biosynthesis via DAP pathway; LL-2,6-diaminopimelate from (S)-tetrahydrodipicolinate (succinylase route): step 3/3. In terms of biological role, catalyzes the hydrolysis of N-succinyl-L,L-diaminopimelic acid (SDAP), forming succinate and LL-2,6-diaminopimelate (DAP), an intermediate involved in the bacterial biosynthesis of lysine and meso-diaminopimelic acid, an essential component of bacterial cell walls. This is Succinyl-diaminopimelate desuccinylase from Ehrlichia ruminantium (strain Gardel).